A 139-amino-acid chain; its full sequence is Putative pre-16S rRNA nuclease (139 aa).

The protein belongs to the YqgF nuclease family.

Its subcellular location is the cytoplasm. In terms of biological role, could be a nuclease involved in processing of the 5'-end of pre-16S rRNA. This Streptococcus pyogenes serotype M1 protein is Putative pre-16S rRNA nuclease.